The following is a 189-amino-acid chain: Photosystem I assembly protein Ycf4 (189 aa).

A run of 2 helical transmembrane segments spans residues 25-45 (SVYFWAVALTGGGLGFTLAGL) and 62-82 (LVFIPQGIAMLFYGVLGSLAG).

It belongs to the Ycf4 family.

The protein localises to the cellular thylakoid membrane. Functionally, seems to be required for the assembly of the photosystem I complex. The polypeptide is Photosystem I assembly protein Ycf4 (Synechococcus sp. (strain JA-2-3B'a(2-13)) (Cyanobacteria bacterium Yellowstone B-Prime)).